We begin with the raw amino-acid sequence, 98 residues long: Aspartyl/glutamyl-tRNA(Asn/Gln) amidotransferase subunit C (98 aa).

This sequence belongs to the GatC family. In terms of assembly, heterotrimer of A, B and C subunits.

The enzyme catalyses L-glutamyl-tRNA(Gln) + L-glutamine + ATP + H2O = L-glutaminyl-tRNA(Gln) + L-glutamate + ADP + phosphate + H(+). The catalysed reaction is L-aspartyl-tRNA(Asn) + L-glutamine + ATP + H2O = L-asparaginyl-tRNA(Asn) + L-glutamate + ADP + phosphate + 2 H(+). Functionally, allows the formation of correctly charged Asn-tRNA(Asn) or Gln-tRNA(Gln) through the transamidation of misacylated Asp-tRNA(Asn) or Glu-tRNA(Gln) in organisms which lack either or both of asparaginyl-tRNA or glutaminyl-tRNA synthetases. The reaction takes place in the presence of glutamine and ATP through an activated phospho-Asp-tRNA(Asn) or phospho-Glu-tRNA(Gln). This is Aspartyl/glutamyl-tRNA(Asn/Gln) amidotransferase subunit C from Acidothermus cellulolyticus (strain ATCC 43068 / DSM 8971 / 11B).